The chain runs to 942 residues: Protein O-mannosyl-transferase TMTC1 (942 aa).

Residues 1 to 20 (MLVTRGDRGGGERAPSRRPR) lie on the Cytoplasmic side of the membrane. A helical membrane pass occupies residues 21–41 (CGLVPAGAAALLAGASCLCYG). The Extracellular segment spans residues 42 to 109 (RSLRGEFVHD…RLNIFLTGMN (68 aa)). The chain crosses the membrane as a helical span at residues 110 to 130 (PFYFHAVNVILHCLVTLVLMY). At 131 to 140 (TCDKTVFKNR) the chain is on the cytoplasmic side. The chain crosses the membrane as a helical span at residues 141–157 (GLAFVTALLFAVHPVHT). Topologically, residues 158-159 (EA) are extracellular. The chain crosses the membrane as a helical span at residues 160–180 (VAGIVGRADVLACLLFLLAFL). Topologically, residues 181–196 (SYQRSLDQGCAGQCFP) are cytoplasmic. A helical membrane pass occupies residues 197 to 217 (TTASPFFLLLSLFLGTCAMLV). Topologically, residues 218 to 331 (KETGITVFGV…LLTLRPFLKR (114 aa)) are extracellular. The interval 245–285 (NGAVCQHSSGQPGSPQPSSQQAHPHRESRKQRFPHKDSWGG) is disordered. Positions 250–266 (QHSSGQPGSPQPSSQQA) are enriched in low complexity. The chain crosses the membrane as a helical span at residues 332–352 (AILVISYVTVILYFRLWIMGG). Topologically, residues 353 to 373 (TMPLFSEQDNPASFSPYILTR) are cytoplasmic. Residues 374 to 394 (FLTYSYLLAFNVWLLLAPITL) traverse the membrane as a helical segment. The Extracellular portion of the chain corresponds to 395–414 (CYDWQVGSIPLVETIWDVRN). A helical transmembrane segment spans residues 415–435 (LATILLAVVMALLSLHCVAAF). Residues 436-441 (KRLEHK) are Cytoplasmic-facing. The helical transmembrane segment at 442 to 462 (EVLAGLLFLVFPFIPASNLFF) threads the bilayer. Residue arginine 463 is a topological domain, extracellular. The chain crosses the membrane as a helical span at residues 464–484 (VGFVVAERVLYMPSMGYCILF). The Cytoplasmic segment spans residues 485–498 (VHGLSKLCAGLSRC). Residues 499 to 519 (GATSLMASTVLLLLLFSWKTV) form a helical membrane-spanning segment. Residues 520 to 942 (KQNEIWLSRE…LQEVRERDQT (423 aa)) lie on the Extracellular side of the membrane. TPR repeat units follow at residues 543-576 (AKVHYNYANFLKDQGRNKEAIYHYRTALKLYPRH), 577-607 (ASALNNLGTLTKDMAEAKMYYQKALQLHPQH), 608-641 (NRALFNLGNLLKSQEKTEEAIMLLKESIKYGPDF), 642-675 (ADAYSSLASLLAEQERFKEAEDIYQAGIKNCPDS), 676-709 (SDLHNNYAVFLVDSGFPEKAVAHYQQAIQLSPSH), 710-742 (HVAVVNLGRLYRSLGENSKAEEWYRRALKVART), 743-776 (AEVLSPLGALYYNTGRHKEALEVYREAVSLQPSQ), 777-810 (RELRLALAQVLAVMGQTKEAEKITSHIVSEEPRC), 811-844 (LECYRLLSAIHSKQEHHGKALEAIEKALQLKPKD), 849-882 (SELFFTKGNQLREQNLLDKAFESYEAAVTLDPDQ), and 883-916 (AQAWMNMGGIRHIQGSYVSARAYYERALKLVPDS).

This sequence belongs to the TMTC family. May interact with FAM168B.

The protein localises to the membrane. The protein resides in the endoplasmic reticulum. The catalysed reaction is a di-trans,poly-cis-dolichyl beta-D-mannosyl phosphate + L-seryl-[protein] = 3-O-(alpha-D-mannosyl)-L-seryl-[protein] + a di-trans,poly-cis-dolichyl phosphate + H(+). It carries out the reaction a di-trans,poly-cis-dolichyl beta-D-mannosyl phosphate + L-threonyl-[protein] = 3-O-(alpha-D-mannosyl)-L-threonyl-[protein] + a di-trans,poly-cis-dolichyl phosphate + H(+). Its pathway is protein modification; protein glycosylation. Its function is as follows. Transfers mannosyl residues to the hydroxyl group of serine or threonine residues. The 4 members of the TMTC family are O-mannosyl-transferases dedicated primarily to the cadherin superfamily, each member seems to have a distinct role in decorating the cadherin domains with O-linked mannose glycans at specific regions. Also acts as O-mannosyl-transferase on other proteins such as PDIA3. The polypeptide is Protein O-mannosyl-transferase TMTC1 (Mus musculus (Mouse)).